The sequence spans 116 residues: Ribosome-binding factor A (116 aa).

Belongs to the RbfA family. Monomer. Binds 30S ribosomal subunits, but not 50S ribosomal subunits or 70S ribosomes.

It is found in the cytoplasm. In terms of biological role, one of several proteins that assist in the late maturation steps of the functional core of the 30S ribosomal subunit. Associates with free 30S ribosomal subunits (but not with 30S subunits that are part of 70S ribosomes or polysomes). Required for efficient processing of 16S rRNA. May interact with the 5'-terminal helix region of 16S rRNA. The protein is Ribosome-binding factor A of Streptococcus pyogenes serotype M5 (strain Manfredo).